Consider the following 741-residue polypeptide: Phosphoribosylformylglycinamidine synthase subunit PurL (741 aa).

Residue histidine 53 is part of the active site. Positions 56 and 95 each coordinate ATP. Glutamate 97 contacts Mg(2+). Substrate is bound by residues 98–101 (SHNH) and arginine 120. Histidine 99 functions as the Proton acceptor in the catalytic mechanism. Aspartate 121 contacts Mg(2+). Glutamine 244 contributes to the substrate binding site. Aspartate 274 serves as a coordination point for Mg(2+). A substrate-binding site is contributed by 318–320 (ESQ). Aspartate 501 and glycine 538 together coordinate ATP. Mg(2+) is bound at residue asparagine 539. Residue serine 541 participates in substrate binding.

It belongs to the FGAMS family. As to quaternary structure, monomer. Part of the FGAM synthase complex composed of 1 PurL, 1 PurQ and 2 PurS subunits.

Its subcellular location is the cytoplasm. It carries out the reaction N(2)-formyl-N(1)-(5-phospho-beta-D-ribosyl)glycinamide + L-glutamine + ATP + H2O = 2-formamido-N(1)-(5-O-phospho-beta-D-ribosyl)acetamidine + L-glutamate + ADP + phosphate + H(+). Its pathway is purine metabolism; IMP biosynthesis via de novo pathway; 5-amino-1-(5-phospho-D-ribosyl)imidazole from N(2)-formyl-N(1)-(5-phospho-D-ribosyl)glycinamide: step 1/2. Part of the phosphoribosylformylglycinamidine synthase complex involved in the purines biosynthetic pathway. Catalyzes the ATP-dependent conversion of formylglycinamide ribonucleotide (FGAR) and glutamine to yield formylglycinamidine ribonucleotide (FGAM) and glutamate. The FGAM synthase complex is composed of three subunits. PurQ produces an ammonia molecule by converting glutamine to glutamate. PurL transfers the ammonia molecule to FGAR to form FGAM in an ATP-dependent manner. PurS interacts with PurQ and PurL and is thought to assist in the transfer of the ammonia molecule from PurQ to PurL. This is Phosphoribosylformylglycinamidine synthase subunit PurL from Limosilactobacillus fermentum (strain NBRC 3956 / LMG 18251) (Lactobacillus fermentum).